A 1338-amino-acid chain; its full sequence is Aldehyde oxidase (1338 aa).

Residues 5-92 form the 2Fe-2S ferredoxin-type domain; it reads SELLFYVNGR…GAAVTTVEGI (88 aa). The [2Fe-2S] cluster site is built by Cys44, Cys49, Cys52, and Cys74. Gln113 is a binding site for Mo-molybdopterin. [2Fe-2S] cluster contacts are provided by Cys114, Cys117, Cys149, and Cys151. Cys151 contacts Mo-molybdopterin. Positions 236-421 constitute an FAD-binding PCMH-type domain; it reads FGSERMMWFS…VSVNIPYSRK (186 aa). Residues 264–271, Ala345, Ser354, His358, Asp367, and Leu411 each bind FAD; that span reads VIMGNTSV. Mo-molybdopterin contacts are provided by residues 806 to 807 and Met1047; that span reads AF. A Phosphoserine modification is found at Ser1068. Residues 1088-1091, Gln1203, and Leu1268 contribute to the Mo-molybdopterin site; that span reads GSVV. The Proton acceptor; for azaheterocycle hydroxylase activity role is filled by Glu1270.

The protein belongs to the xanthine dehydrogenase family. As to quaternary structure, homodimer. [2Fe-2S] cluster serves as cofactor. FAD is required as a cofactor. It depends on Mo-molybdopterin as a cofactor. In terms of tissue distribution, abundant in liver, expressed in adipose tissue and at lower levels in lung, skeletal muscle, pancreas. In contrast to mice, no significant gender difference in AOX1 expression level (at protein level).

It is found in the cytoplasm. It carries out the reaction an aldehyde + O2 + H2O = a carboxylate + H2O2 + H(+). It catalyses the reaction retinal + O2 + H2O = retinoate + H2O2 + H(+). Is very potently inhibited by raloxifene. Also inhibited by estradiol, ethinyl estradiol, hydralazine, menadione, isovanillin and thioridazine. Not inhibited by allopurinol, a xanthine dehydrogenase potent inhibitor. Its function is as follows. Oxidase with broad substrate specificity, oxidizing aromatic azaheterocycles, such as N1-methylnicotinamide, N-methylphthalazinium and phthalazine, as well as aldehydes, such as benzaldehyde, retinal, pyridoxal, and vanillin. Plays a key role in the metabolism of xenobiotics and drugs containing aromatic azaheterocyclic substituents. Participates in the bioactivation of prodrugs such as famciclovir, catalyzing the oxidation step from 6-deoxypenciclovir to penciclovir, which is a potent antiviral agent. Is probably involved in the regulation of reactive oxygen species homeostasis. May be a prominent source of superoxide generation via the one-electron reduction of molecular oxygen. May also catalyze nitric oxide (NO) production via the reduction of nitrite to NO with NADH or aldehyde as electron donor. May play a role in adipogenesis. The protein is Aldehyde oxidase of Homo sapiens (Human).